An 873-amino-acid polypeptide reads, in one-letter code: Leucine--tRNA ligase (873 aa).

The 'HIGH' region signature appears at proline 42–histidine 52. Residues lysine 628 to serine 632 carry the 'KMSKS' region motif. Residue lysine 631 participates in ATP binding.

The protein belongs to the class-I aminoacyl-tRNA synthetase family.

The protein resides in the cytoplasm. The catalysed reaction is tRNA(Leu) + L-leucine + ATP = L-leucyl-tRNA(Leu) + AMP + diphosphate. This is Leucine--tRNA ligase from Aromatoleum aromaticum (strain DSM 19018 / LMG 30748 / EbN1) (Azoarcus sp. (strain EbN1)).